Reading from the N-terminus, the 257-residue chain is Phosphatidylglycerol--prolipoprotein diacylglyceryl transferase (257 aa).

7 helical membrane-spanning segments follow: residues 13 to 33 (IGPIDVHWYGIFMAISIAIGG), 49 to 69 (FLLNLLMIVVISGVVGARLMF), 88 to 108 (IYEGGLSWHGAVLGGFLAGLY), 123 to 143 (FAVLGLSIGNILVRIGNIFNQ), 152 to 172 (FAFGRWPAQLVGVAMGIILLI), 185 to 202 (GYQFWSFIFYYQLMRGLI), and 223 to 243 (IGFFTLTQLVTPFILILAYWM). Arg-136 contacts a 1,2-diacyl-sn-glycero-3-phospho-(1'-sn-glycerol).

This sequence belongs to the Lgt family.

It localises to the cell membrane. It carries out the reaction L-cysteinyl-[prolipoprotein] + a 1,2-diacyl-sn-glycero-3-phospho-(1'-sn-glycerol) = an S-1,2-diacyl-sn-glyceryl-L-cysteinyl-[prolipoprotein] + sn-glycerol 1-phosphate + H(+). The protein operates within protein modification; lipoprotein biosynthesis (diacylglyceryl transfer). Catalyzes the transfer of the diacylglyceryl group from phosphatidylglycerol to the sulfhydryl group of the N-terminal cysteine of a prolipoprotein, the first step in the formation of mature lipoproteins. In Thermoanaerobacter pseudethanolicus (strain ATCC 33223 / 39E) (Clostridium thermohydrosulfuricum), this protein is Phosphatidylglycerol--prolipoprotein diacylglyceryl transferase.